Consider the following 129-residue polypeptide: uncharacterized protein (129 aa).

The protein localises to the cytoplasm. Its subcellular location is the cytosol. The protein resides in the nucleus. This is an uncharacterized protein from Schizosaccharomyces pombe (strain 972 / ATCC 24843) (Fission yeast).